The chain runs to 504 residues: MAAAAVVHLSVHGRLRRSPELHARPYHRPSLLRCRAFKQEADNGGEEASSSPPPPTTAEARRRRKGPLYKLKAAIQGLAGSRSAAAEAYGGEYQRAVEKAEEIFFSVATQVGRYVITMMSSGVVLGVGFQLSGGDSQMNTLIWYSWLGGVIIGTMIGANSVLEEHCKAGPRNVVITGSTRGLGKALAREFLLSGDRVVIASRSPESVLQTINELEENIQEGLSVAKKKQREILLHAKVVGTSCDVCKPEDVKKLVNFAKDELGSIDIWINNAGTNKGFRPLVNFSDEDISQIVSTNLVGSLLCTREAMNVMQHQQKGGHVFNMDGAGSGGSSTPLTAVYGSTKCGLRQFQASLLKESRRSKVGVHTASPGMVLTDLLLSGSSLRNKQMFNLICELPETVARTLVPRMRVVKGSGKAINYLTPPRILLALVTAWVRRGRWFDEEGRAVYAAEADRIRNWAESRARFSFTDAMEMYTENTWVSVFSLSVVCAFIILSSSGGPLPGT.

The N-terminal 33 residues, 1–33, are a transit peptide targeting the chloroplast; that stretch reads MAAAAVVHLSVHGRLRRSPELHARPYHRPSLLR. The segment at 41-63 is disordered; sequence ADNGGEEASSSPPPPTTAEARRR. A run of 2 helical transmembrane segments spans residues 114–134 and 141–161; these read YVITMMSSGVVLGVGFQLSGG and LIWYSWLGGVIIGTMIGANSV. An NAD(+)-binding site is contributed by 175–199; it reads ITGSTRGLGKALAREFLLSGDRVVI. The active-site Proton acceptor is Tyr339. The helical transmembrane segment at 479–499 threads the bilayer; sequence WVSVFSLSVVCAFIILSSSGG.

It belongs to the short-chain dehydrogenases/reductases (SDR) family. In terms of assembly, interacts with NOL to form a complex that acts as a chlorophyll b reductase. In terms of tissue distribution, expressed in leaves and stems. Also detected in non-photosynthetic tissues such as roots.

It is found in the plastid. Its subcellular location is the chloroplast thylakoid membrane. The enzyme catalyses 7(1)-hydroxychlorophyllide a + NAD(+) = chlorophyllide b + NADH + H(+). The catalysed reaction is 7(1)-hydroxychlorophyllide a + NADP(+) = chlorophyllide b + NADPH + H(+). Required for proper chloroplast degradation. Involved in chlorophyll b degradation. This chain is Probable chlorophyll(ide) b reductase NYC1, chloroplastic (NYC1), found in Oryza sativa subsp. japonica (Rice).